A 751-amino-acid polypeptide reads, in one-letter code: FAD-dependent monooxygenase atnA (751 aa).

A helical membrane pass occupies residues 8 to 28 (LIVGGGVAGLSLAIMLEAYGF). Residues glutamate 34, glycine 48, and arginine 109 each contribute to the FAD site. Tyrosine 218 is a catalytic residue. FAD is bound by residues aspartate 311 and alanine 324. Transmembrane regions (helical) follow at residues 446–466 (PLAT…PWSV), 481–501 (SEVF…LWVI), 508–528 (LLIS…YWGW), 563–583 (ALLP…ALAS), 590–610 (DWWP…STFL), 639–659 (IAVV…AALL), 663–683 (IISL…ALIV), and 706–726 (AWAV…LAGA).

The protein belongs to the paxM FAD-dependent monooxygenase family. Requires FAD as cofactor.

It is found in the membrane. Its pathway is secondary metabolite biosynthesis; terpenoid biosynthesis. FAD-dependent monooxygenase; part of the gene cluster that mediates the biosynthesis of the meroterpenoids arthripenoids. The pathway begins with the HR-PKS atnH that catalyzes two chain-extension steps to form a reduced triketide, which then primes the SAT domain in the NR-PKS atnG to initiate three more cycles of extension to give a linear hexaketide corresponding to the polyketide part of arthripenoids. The FAD-dependent monooxygenase atnJ then performs an oxidative decarboxylation at C11 of the atnH/atnG product, via an electrophilic aromatic hydroxylation with concomitant ipso-decarboxylation. The membrane-bound polyprenyl transferase atnF then introduces a farnesyl group before the FAD-dependent monooxygenase atnK functions as the first epoxidase on terminal C12'-C13' olefin, followed by a second epoxidation on C7'-C8' catalyzed by atnA. The terpene cyclase/mutase atnI then initiates the sequential tricyclic ring formation through protonation of the terminal epoxide and catalyzes the regioselective and stereoselective 6/6/6-tricyclic ring formation. The cytochrome P450 monooxygenase atnM is responsible for hydroxylating both C1' and C10'. The next steps may involve ketoreduction and acetyl transfer by the ketoreductase atnB and the acetyltransferase atnC, and lead to the production of arthripenoid B, the final biosynthetic product of the atn cluster. The hydroquinone moiety in arthripenoid B is prone to undergo spontaneous oxidation to afford a benzoquinone compound, a key intermediate for generating structure diversity. For instance, addition of a cysteine followed by ring contraction gives arthripenoid A, tautomerization gives the main product arthripenoid C, addition of a molecular of water or amine affords arthripenoid D or E, respectively, and loss of one water forms arthripenoid F. This chain is FAD-dependent monooxygenase atnA, found in Arthrinium sp.